A 434-amino-acid polypeptide reads, in one-letter code: Citrate synthase (434 aa).

Residues H310 and D368 contribute to the active site.

This sequence belongs to the citrate synthase family.

The catalysed reaction is oxaloacetate + acetyl-CoA + H2O = citrate + CoA + H(+). The protein operates within carbohydrate metabolism; tricarboxylic acid cycle; isocitrate from oxaloacetate: step 1/2. The chain is Citrate synthase (gltA) from Bradyrhizobium diazoefficiens (strain JCM 10833 / BCRC 13528 / IAM 13628 / NBRC 14792 / USDA 110).